A 610-amino-acid chain; its full sequence is Modifier of mdg4 (610 aa).

Positions 1 to 160 are self-association; that stretch reads MADDEQFSLC…QQPRASARYK (160 aa). Positions 1–308 are interaction with Chi; that stretch reads MADDEQFSLC…EEAEYIDLPM (308 aa). Residues 32–98 enclose the BTB domain; that stretch reads VDVSLAAEGQ…MYCGEVNVKQ (67 aa). Disordered stretches follow at residues 115 to 156, 219 to 259, 311 to 339, and 386 to 432; these read GLTD…PRAS, VSTN…DSTT, PTKS…DDTY, and ESSF…PKPK. The span at 122 to 135 shows a compositional bias: pro residues; the sequence is APQPPQESSPPPAA. The span at 136–156 shows a compositional bias: low complexity; sequence PHVQQQQIPAQRVQRQQPRAS. The segment covering 222–238 has biased composition (polar residues); it reads NKRSAQRSSLTPASSSA. Serine 230 is subject to Phosphoserine. Over residues 312–325 the composition is skewed to basic and acidic residues; that stretch reads TKSEPDYSEDHGDA. Residues 386 to 400 show a composition bias toward polar residues; it reads ESSFVDTSGDQGNTE. The segment covering 401 to 410 has biased composition (low complexity); it reads AQAATSASAT. A compositionally biased stretch (basic and acidic residues) spans 422-432; it reads TKVEDQTPKPK. The segment at 452-512 adopts an FLYWCH-type zinc-finger fold; it reads YASTTKGGVK…VFPYEGEHVH (61 aa). The interval 551–610 is interaction with su(Hw); it reads LEEADDKEDEDFEEFEIQEIDEIELDEPEKTPAKEEEVDPNDFREKIKRRLQKALQNKKK. Acidic residues predominate over residues 567–577; it reads IQEIDEIELDE. The tract at residues 567 to 595 is disordered; the sequence is IQEIDEIELDEPEKTPAKEEEVDPNDFRE. Residues 578 to 595 show a composition bias toward basic and acidic residues; the sequence is PEKTPAKEEEVDPNDFRE.

Can self-associate. Interacts with Chi. Interacts with Top2. Isoform mod2.2: Component of the gypsy chromatin insulator complex, composed of Cp190, mod(mdg4) and su(Hw). The gypsy chromatin insulator complex interacts with Topors via mod(mdg4) and su(Hw). Isoform mod2.2 interacts with Trl/GAGA and interaction with this protein may bypass the repressive effects of the su(Hw) insulator.

It is found in the nucleus. The protein localises to the chromosome. Functionally, component of the gypsy chromatin insulator complex which is required for the function of the gypsy chromatin insulator and other endogenous chromatin insulators. Chromatin insulators are regulatory elements which establish independent domains of transcriptional activity within eukaryotic genomes. Insulators have two defining properties; they can block the communication between an enhancer and a promoter when placed between them and can also buffer transgenes from position effect variegation (PEV). Insulators are proposed to structure the chromatin fiber into independent domains of differing transcriptional potential by promoting the formation of distinct chromatin loops. This chromatin looping may involve the formation of insulator bodies, where homotypic interactions between individual subunits of the insulator complex could promote the clustering of widely spaced insulators at the nuclear periphery. Within the gypsy insulator complex, this protein may control the nature of the repressive effect of su(Hw): in the absence of mod(mdg4) protein, su(Hw) exerts a bidirectional silencing effect, whereas in the presence of mod(mdg4), the silencing effect is unidirectional. Isoform H is specifically required to maintain the pairing of achiasmate homologs in male meiosis I which is mediated by the rDNA repeats on the achiasmate X-Y bivalents. Isoform H also plays a role in apoptotic regulatory pathways. This is Modifier of mdg4 from Drosophila melanogaster (Fruit fly).